A 486-amino-acid chain; its full sequence is Cysteine--tRNA ligase (486 aa).

Cysteine 30 is a Zn(2+) binding site. Residues 32–42 (PTVYDRAHLGN) carry the 'HIGH' region motif. Cysteine 221, histidine 246, and glutamate 250 together coordinate Zn(2+). Residues 279–283 (KMSKS) carry the 'KMSKS' region motif. Lysine 282 serves as a coordination point for ATP.

It belongs to the class-I aminoacyl-tRNA synthetase family. In terms of assembly, monomer. Zn(2+) is required as a cofactor.

The protein localises to the cytoplasm. It carries out the reaction tRNA(Cys) + L-cysteine + ATP = L-cysteinyl-tRNA(Cys) + AMP + diphosphate. The chain is Cysteine--tRNA ligase from Cereibacter sphaeroides (strain ATCC 17025 / ATH 2.4.3) (Rhodobacter sphaeroides).